Reading from the N-terminus, the 508-residue chain is uncharacterized protein (508 aa).

The 161-residue stretch at 3–163 folds into the Resolvase/invertase-type recombinase catalytic domain; the sequence is KAIAYMRFSS…LSWKKKRQDA (161 aa). S11 (O-(5'-phospho-DNA)-serine intermediate) is an active-site residue. Positions 175–290 form a DNA-binding region, recombinase; it reads PRWLSLDDKR…QEIRLAPFGI (116 aa).

This is an uncharacterized protein from Escherichia coli (strain K12).